A 391-amino-acid chain; its full sequence is Histidinol-phosphate aminotransferase (391 aa).

Lysine 246 bears the N6-(pyridoxal phosphate)lysine mark.

It belongs to the class-II pyridoxal-phosphate-dependent aminotransferase family. Histidinol-phosphate aminotransferase subfamily. It depends on pyridoxal 5'-phosphate as a cofactor.

It carries out the reaction L-histidinol phosphate + 2-oxoglutarate = 3-(imidazol-4-yl)-2-oxopropyl phosphate + L-glutamate. Its pathway is amino-acid biosynthesis; L-histidine biosynthesis; L-histidine from 5-phospho-alpha-D-ribose 1-diphosphate: step 7/9. This is Histidinol-phosphate aminotransferase from Methanopyrus kandleri (strain AV19 / DSM 6324 / JCM 9639 / NBRC 100938).